A 467-amino-acid polypeptide reads, in one-letter code: ATP-dependent protease ATPase subunit ClpY (467 aa).

Residues valine 20, 62-67, aspartate 279, glutamate 345, and arginine 417 each bind ATP; that span reads GVGKTE.

Belongs to the ClpX chaperone family. HslU subfamily. In terms of assembly, a double ring-shaped homohexamer of ClpQ is capped on each side by a ring-shaped ClpY homohexamer. The assembly of the ClpQ/ClpY complex is dependent on binding of ATP.

The protein resides in the cytoplasm. With respect to regulation, ATPase activity is much induced upon complex formation with ClpQ. Its function is as follows. ATPase subunit of a proteasome-like degradation complex; this subunit has chaperone activity. This is ATP-dependent protease ATPase subunit ClpY (clpY) from Bacillus subtilis (strain 168).